The following is a 467-amino-acid chain: DNA polymerase IV (467 aa).

Residues 5 to 187 (VLHIDMDAFF…LPVGALWGVG (183 aa)) enclose the UmuC domain. Aspartate 9 and aspartate 104 together coordinate Mg(2+). The active site involves glutamate 105. 2 disordered regions span residues 364 to 383 (PDTD…STQV) and 429 to 449 (KGRT…DPLD).

It belongs to the DNA polymerase type-Y family. In terms of assembly, monomer. Mg(2+) serves as cofactor.

Its subcellular location is the cytoplasm. It carries out the reaction DNA(n) + a 2'-deoxyribonucleoside 5'-triphosphate = DNA(n+1) + diphosphate. Its function is as follows. Poorly processive, error-prone DNA polymerase involved in untargeted mutagenesis. Copies undamaged DNA at stalled replication forks, which arise in vivo from mismatched or misaligned primer ends. These misaligned primers can be extended by PolIV. Exhibits no 3'-5' exonuclease (proofreading) activity. May be involved in translesional synthesis, in conjunction with the beta clamp from PolIII. The chain is DNA polymerase IV from Corynebacterium glutamicum (strain ATCC 13032 / DSM 20300 / JCM 1318 / BCRC 11384 / CCUG 27702 / LMG 3730 / NBRC 12168 / NCIMB 10025 / NRRL B-2784 / 534).